Consider the following 142-residue polypeptide: Phosphoribosyl-AMP cyclohydrolase (142 aa).

Asp-92 contributes to the Mg(2+) binding site. Cys-93 lines the Zn(2+) pocket. Positions 94 and 96 each coordinate Mg(2+). Cys-109 and Cys-116 together coordinate Zn(2+).

It belongs to the PRA-CH family. Homodimer. Mg(2+) serves as cofactor. The cofactor is Zn(2+).

The protein localises to the cytoplasm. The enzyme catalyses 1-(5-phospho-beta-D-ribosyl)-5'-AMP + H2O = 1-(5-phospho-beta-D-ribosyl)-5-[(5-phospho-beta-D-ribosylamino)methylideneamino]imidazole-4-carboxamide. The protein operates within amino-acid biosynthesis; L-histidine biosynthesis; L-histidine from 5-phospho-alpha-D-ribose 1-diphosphate: step 3/9. Its function is as follows. Catalyzes the hydrolysis of the adenine ring of phosphoribosyl-AMP. This chain is Phosphoribosyl-AMP cyclohydrolase, found in Alkalilimnicola ehrlichii (strain ATCC BAA-1101 / DSM 17681 / MLHE-1).